A 226-amino-acid chain; its full sequence is Lipid phosphate phosphatase gamma (226 aa).

Met-1 bears the N-acetylmethionine mark. Helical transmembrane passes span 24-44 (LGHFLAWISLVPVFISLGGFV), 52-72 (ELQGIFFGIGLVISQFINEFI), 102-122 (FMFFFATYFSLMGCKGIGFWF), 128-148 (WIMNLLHWSLAVVTMYSRVYL), and 152-174 (TVAQVFAGAALGGIVGASWFWVV).

This sequence belongs to the PA-phosphatase related phosphoesterase family. Expressed in root tips, root branch points, vascular tissue of cotyledons and leaves, pistil, anthers and filaments.

The protein resides in the plastid. The protein localises to the chloroplast inner membrane. Inhibited by Mg(2+). Exhibits phosphatidate phosphatase (PAP) activity in vitro. May play a primary role as PAP in plastids. The polypeptide is Lipid phosphate phosphatase gamma (LPPG) (Arabidopsis thaliana (Mouse-ear cress)).